We begin with the raw amino-acid sequence, 307 residues long: Ribosomal RNA small subunit methyltransferase H (307 aa).

Residues 34-36, Asp-54, Phe-79, Asp-101, and Gln-108 contribute to the S-adenosyl-L-methionine site; that span reads GGH.

The protein belongs to the methyltransferase superfamily. RsmH family.

It localises to the cytoplasm. It catalyses the reaction cytidine(1402) in 16S rRNA + S-adenosyl-L-methionine = N(4)-methylcytidine(1402) in 16S rRNA + S-adenosyl-L-homocysteine + H(+). Functionally, specifically methylates the N4 position of cytidine in position 1402 (C1402) of 16S rRNA. In Ruthia magnifica subsp. Calyptogena magnifica, this protein is Ribosomal RNA small subunit methyltransferase H.